The chain runs to 700 residues: MERYVTIASCQLNQWAMDFEGNRLRIIDSIKEAKRQNASLRVGPELEVTGYGCEDHFLESDTYYHSWEMLCSIIHDPDCQDILLDIGMPVMHKAMRHNCRILALNGKILLIRPKIWLCDDGNFRESRWFTPWLRPRVVETHYLPTFVAKSLNQTTVPIGDAILQCNETVVGVETCEELFTPNSPHIDMALDGVEIFINASGSHHELRKLTTRVNLIQNATEKCGGIYLYSNQRGCDGGRLYYDGSSMIFANGKMLAQGHQFSLKDVEVISATVDVDTVRSYRFQPSHGIQGVTRPSYERIHVNFSLSSYQQDYDIYRKPTDPIEVTIPLPEEEITFGPACWLWDYLRRSHAAGFFLPLSGGLDSCSTAVLVYSMCRIVCKAMEEDDAQVLSDVRRIVGDPSYSSTDPKKLLNHLFYTAFMGSEHSSKETRSRAKELSSLIGSYHTDVNIDTMTSAVVKLFALVTGKTPQFRSNGGTNAENLALQNIQARSRMLLGYLFAQLLPWVRGYSGSLLVLGSSNVDECLRGYLTKYDCSSADINPIGGISKTDLKSFLRYAKEALDLPILQEFLDATPTAELEPTTESYVQSDEADMGMTYAELSVFGRLRKISKCGPYSMFTQLMHQWGDRLSPSQVAEKVKRFFHYYGINRHKMTTLTPSYHAETYGVDDNRYDLRQFLYPSWTWQNKKIDALASKFEQHQRK.

The 271-residue stretch at 5–275 (VTIASCQLNQ…VEVISATVDV (271 aa)) folds into the CN hydrolase domain. E45 acts as the Proton acceptor; for glutaminase activity in catalysis. The For glutaminase activity role is filled by K114. C175 acts as the Nucleophile; for glutaminase activity in catalysis. The tract at residues 327-700 (IPLPEEEITF…ASKFEQHQRK (374 aa)) is ligase. 357 to 364 (PLSGGLDS) contributes to the ATP binding site. Residue S359 is part of the active site.

In the C-terminal section; belongs to the NAD synthetase family.

The catalysed reaction is deamido-NAD(+) + L-glutamine + ATP + H2O = L-glutamate + AMP + diphosphate + NAD(+) + H(+). The protein operates within cofactor biosynthesis; NAD(+) biosynthesis; NAD(+) from deamido-NAD(+) (L-Gln route): step 1/1. The polypeptide is Putative glutamine-dependent NAD(+) synthetase (Schizosaccharomyces pombe (strain 972 / ATCC 24843) (Fission yeast)).